A 29-amino-acid polypeptide reads, in one-letter code: Brevinin-2Ed (29 aa).

C23 and C29 are oxidised to a cystine.

Belongs to the frog skin active peptide (FSAP) family. Brevinin subfamily. Expressed by the skin glands.

It is found in the secreted. Shows antibacterial activity against representative Gram-negative and Gram-positive bacterial species, and hemolytic activity. The chain is Brevinin-2Ed from Pelophylax lessonae (Pool frog).